The chain runs to 467 residues: Transcriptional regulator of yeast form adherence 6 (467 aa).

A compositionally biased stretch (polar residues) spans 43-52 (NTSDAGSIPT). Disordered regions lie at residues 43–83 (NTSD…NIDS), 128–149 (GSSG…NSNN), 245–275 (ESPE…SNSS), 312–365 (NNQL…SGSK), and 390–439 (STLN…DNDR). The 82-residue stretch at 92-173 (ETKQLHSIIE…KSSVEYILYL (82 aa)) folds into the bHLH domain. Composition is skewed to low complexity over residues 257–275 (VSET…SNSS) and 312–322 (NNQLNNRKNSN). The segment covering 323-338 (PISPQTVCIKSQNPSP) has biased composition (polar residues). Residues 345-365 (SSLSTSIVNSPSSSSSLSGSK) show a composition bias toward low complexity. Polar residues predominate over residues 417-432 (GSANTETVNSGSASSD).

It localises to the nucleus. Its function is as follows. Transcription factor required for yeast cell adherence to silicone substrate. In Candida albicans (strain SC5314 / ATCC MYA-2876) (Yeast), this protein is Transcriptional regulator of yeast form adherence 6 (TRY6).